The following is a 527-amino-acid chain: Oviduct-specific glycoprotein (527 aa).

An N-terminal signal peptide occupies residues 1-21; sequence MGKLLLWVGLVLVLKHHNGAA. The GH18 domain occupies 22–385; sequence HKLVCYFANW…YMLNDLLLKA (364 aa). The cysteines at positions 26 and 51 are disulfide-linked. N-linked (GlcNAc...) asparagine glycosylation occurs at N62. Residues 71–72, 98–101, Y142, 211–214, and W355 each bind chitin; these read AR, GGWN, and LSYD. Residues N402 and N441 are each glycosylated (N-linked (GlcNAc...) asparagine). Residues 433-527 form a disordered region; sequence TETHGRSDNM…MTLPSGKRSD (95 aa).

It belongs to the glycosyl hydrolase 18 family. As to expression, oviduct.

It localises to the cytoplasmic vesicle. It is found in the secretory vesicle. Functionally, binds to oocyte zona pellucida in vivo. May play a role in the fertilization process and/or early embryonic development. This is Oviduct-specific glycoprotein (OVGP1) from Sus scrofa (Pig).